The following is a 962-amino-acid chain: Translation initiation factor IF-2 (962 aa).

Basic and acidic residues predominate over residues 52–77 (RSHGQADDSSRKKITLTKRETSEIRQ). Disordered regions lie at residues 52–87 (RSHG…TRTV) and 121–378 (AVEE…EPVV). Over residues 78-87 (SDGTGKTRTV) the composition is skewed to polar residues. Basic and acidic residues-rich tracts occupy residues 123-183 (EEAR…KAEE), 197-250 (DSSR…EAEA), and 267-278 (PSERKAEEKKAE). Residues 342-355 (TSGGVGGWRGGPRG) are compositionally biased toward gly residues. A tr-type G domain is found at 462–631 (PRPPVVTVMG…LLQAEVLELT (170 aa)). The interval 471–478 (GHVDHGKT) is G1. 471 to 478 (GHVDHGKT) contributes to the GTP binding site. Residues 496-500 (GITQH) form a G2 region. The interval 517 to 520 (DTPG) is G3. GTP-binding positions include 517–521 (DTPGH) and 571–574 (NKID). Residues 571–574 (NKID) are G4. Residues 607–609 (SAK) are G5.

This sequence belongs to the TRAFAC class translation factor GTPase superfamily. Classic translation factor GTPase family. IF-2 subfamily.

It localises to the cytoplasm. In terms of biological role, one of the essential components for the initiation of protein synthesis. Protects formylmethionyl-tRNA from spontaneous hydrolysis and promotes its binding to the 30S ribosomal subunits. Also involved in the hydrolysis of GTP during the formation of the 70S ribosomal complex. This chain is Translation initiation factor IF-2, found in Cupriavidus necator (strain ATCC 17699 / DSM 428 / KCTC 22496 / NCIMB 10442 / H16 / Stanier 337) (Ralstonia eutropha).